Consider the following 381-residue polypeptide: MIRKIPSFIEVYKSLIQIPTISSNNKLLDQSNKNFIDLLSNYFSDLNFSVKNYQIPHTDKYNMLACVGSGNGGLLLSGHSDTVDFDEKKWTKDPFKLTETNNKFYGLGAVDMKGFFALILEVISSINIKKINKPIYILATANEETDMSGAKNFIQSTIIKPDCIIIGEPTSLKLINAHKGHMSYSIKVIGDTGHSSNPDHGVNSIEIMHDVIRSLLILKKYFKEEYQHPNFSIPYPTMNLSSIHGGSAINRICPLCILNFEIRPIPGLTLTQIEIVIKEKLETIMKKWSHRIFIKKLFSSVPAYECPHNSGTIKIVEKLCQLNSAAVNYCTEAPFLQRIAPTLILGPGSIEQAHQPDEYLEHYFIQPTKNIITKLINKFCY.

His79 contacts Zn(2+). The active site involves Asp81. Position 111 (Asp111) interacts with Zn(2+). Glu143 is a catalytic residue. Residues Glu144, Glu168, and His354 each contribute to the Zn(2+) site.

It belongs to the peptidase M20A family. ArgE subfamily. In terms of assembly, homodimer. It depends on Zn(2+) as a cofactor. Co(2+) is required as a cofactor. The cofactor is glutathione.

It is found in the cytoplasm. The enzyme catalyses N(2)-acetyl-L-ornithine + H2O = L-ornithine + acetate. It participates in amino-acid biosynthesis; L-arginine biosynthesis; L-ornithine from N(2)-acetyl-L-ornithine (linear): step 1/1. In terms of biological role, catalyzes the hydrolysis of the amide bond of N(2)-acetylated L-amino acids. Cleaves the acetyl group from N-acetyl-L-ornithine to form L-ornithine, an intermediate in L-arginine biosynthesis pathway, and a branchpoint in the synthesis of polyamines. The protein is Acetylornithine deacetylase of Buchnera aphidicola subsp. Acyrthosiphon pisum (strain Tuc7).